Reading from the N-terminus, the 474-residue chain is Cysteine protease ATG4A (474 aa).

The segment at 1–32 is disordered; the sequence is MTSLPGRGVSPSSSDPLCEGNAAPSSSSSSGQ. Cys161 functions as the Nucleophile in the catalytic mechanism. Catalysis depends on residues Asp358 and His360. A compositionally biased stretch (polar residues) spans 439-449; the sequence is KQMYNEESSSG. Positions 439-474 are disordered; sequence KQMYNEESSSGDGMDSINVEGLDGSGETGEEEWQIL.

This sequence belongs to the peptidase C54 family. As to quaternary structure, interacts with ATG8.

The protein localises to the cytoplasm. The enzyme catalyses [protein]-C-terminal L-amino acid-glycyl-phosphatidylethanolamide + H2O = [protein]-C-terminal L-amino acid-glycine + a 1,2-diacyl-sn-glycero-3-phosphoethanolamine. Cysteine protease that plays a key role in autophagy by mediating both proteolytic activation and delipidation of ATG8 family proteins. The protease activity is required for proteolytic activation of ATG8 family proteins: cleaves the C-terminal amino acid of ATG8 proteins to reveal a C-terminal glycine. Exposure of the glycine at the C-terminus is essential for ATG8 proteins conjugation to phosphatidylethanolamine (PE) and insertion to membranes, which is necessary for autophagy. In addition to the protease activity, also mediates delipidation of PE-conjugated ATG8 proteins. The polypeptide is Cysteine protease ATG4A (ATG4A) (Oryza sativa subsp. japonica (Rice)).